The following is a 209-amino-acid chain: ATP-dependent dethiobiotin synthetase BioD (209 aa).

An ATP-binding site is contributed by aspartate 13–valine 18. Threonine 17 is a binding site for Mg(2+). Lysine 33 is a catalytic residue. Mg(2+) is bound at residue glutamate 100. Residues glutamate 100–glycine 103 and proline 184–leucine 186 each bind ATP.

It belongs to the dethiobiotin synthetase family. In terms of assembly, homodimer. The cofactor is Mg(2+).

Its subcellular location is the cytoplasm. The catalysed reaction is (7R,8S)-7,8-diammoniononanoate + CO2 + ATP = (4R,5S)-dethiobiotin + ADP + phosphate + 3 H(+). The protein operates within cofactor biosynthesis; biotin biosynthesis; biotin from 7,8-diaminononanoate: step 1/2. Functionally, catalyzes a mechanistically unusual reaction, the ATP-dependent insertion of CO2 between the N7 and N8 nitrogen atoms of 7,8-diaminopelargonic acid (DAPA, also called 7,8-diammoniononanoate) to form a ureido ring. This Rhizorhabdus wittichii (strain DSM 6014 / CCUG 31198 / JCM 15750 / NBRC 105917 / EY 4224 / RW1) (Sphingomonas wittichii) protein is ATP-dependent dethiobiotin synthetase BioD.